Here is a 147-residue protein sequence, read N- to C-terminus: Sec-independent protein translocase protein TatB (147 aa).

A helical transmembrane segment spans residues 2–22 (FDGIGFMELLLIGVLGLVVLG). Positions 68–147 (ESKGLSNLSP…DTRSNPKANG (80 aa)) are disordered. Positions 71–97 (GLSNLSPELQESIDQLKQAAQSVNRPY) are enriched in polar residues. A compositionally biased stretch (low complexity) spans 112–133 (PASQSVSSEASPTASSAPTSEP).

This sequence belongs to the TatB family. In terms of assembly, the Tat system comprises two distinct complexes: a TatABC complex, containing multiple copies of TatA, TatB and TatC subunits, and a separate TatA complex, containing only TatA subunits. Substrates initially bind to the TatABC complex, which probably triggers association of the separate TatA complex to form the active translocon.

It is found in the cell inner membrane. Its function is as follows. Part of the twin-arginine translocation (Tat) system that transports large folded proteins containing a characteristic twin-arginine motif in their signal peptide across membranes. Together with TatC, TatB is part of a receptor directly interacting with Tat signal peptides. TatB may form an oligomeric binding site that transiently accommodates folded Tat precursor proteins before their translocation. The chain is Sec-independent protein translocase protein TatB from Shewanella sp. (strain MR-4).